A 281-amino-acid polypeptide reads, in one-letter code: MQTFSTKAQLRAALLKHHRKHDHVVLVPTMGALHAGHRALLEQARKLAGEDGVVVASIFVNPIQFNNSSDLQTYPRTPEKDLEVCEGAGVDYVFSPAPEEMYSGERSIAVEESFLSATLCGASRPGHFSGVCTVLAKLFNLVQPTDAIFGKKDYQQLAIIRRMVRDLDFPVRIHGAEIVRHGNGLAYSSRNARLTPEQKEQAVVIRQAMLQARDEFQAGADASKVKEHAAAMIEGVPGTRIDYLEIVDAETMQPVAENRKPALMAAAVYFGDVRLIDNIEL.

ATP is bound at residue M30–H37. The active-site Proton donor is H37. (R)-pantoate is bound at residue Q64. Q64 is a binding site for beta-alanine. G150–D153 provides a ligand contact to ATP. Q156 provides a ligand contact to (R)-pantoate. ATP contacts are provided by residues V179 and Y187–R190.

This sequence belongs to the pantothenate synthetase family. As to quaternary structure, homodimer.

Its subcellular location is the cytoplasm. It catalyses the reaction (R)-pantoate + beta-alanine + ATP = (R)-pantothenate + AMP + diphosphate + H(+). It participates in cofactor biosynthesis; (R)-pantothenate biosynthesis; (R)-pantothenate from (R)-pantoate and beta-alanine: step 1/1. Functionally, catalyzes the condensation of pantoate with beta-alanine in an ATP-dependent reaction via a pantoyl-adenylate intermediate. This chain is Pantothenate synthetase, found in Akkermansia muciniphila (strain ATCC BAA-835 / DSM 22959 / JCM 33894 / BCRC 81048 / CCUG 64013 / CIP 107961 / Muc).